The following is a 485-amino-acid chain: MSASDFSSAVVVLAAGAGTRMKSDLQKTLHSIGGRSLISHSLHAAAGLNPEHIVAVIGHGRDQVGPAVAQVAEELDREVLIAIQEEQNGTGHAVQCAMDQLDGFEGTIIVTNGDVPLLTDHTLSALLDAHVEVPTAVTVLTMRLDDPTGYGRIVRNEEGEVTAIVEQKDASAEIQAIDEVNSGVFAFDAAILRSALAELKSDNAQGELYLTDVLGIARGEGHPVRAHTATDARELAGVNDRVQLAEAGAELNRRTVIAAMRGGATIVDPATTWIDVEVSIGRDVIIHPGTQLKGETVIGDRVEVGPDTTLTNMTINEGASVVRTHGFDSTIGENATVGPFTYIRPGTTLGPEGKLGGFVETKKATIGRGSKVPHLTYVGDATIGEESNIGASSVFVNYDGENKHHTTIGSHVRTGSDTMFIAPVTVGDGAYSGAGTVIKDDVPPGALAVSGGRQRNIEGWVQKKRPGTAAAQAAEAAQNVHNQEG.

Positions 1–241 (MSASDFSSAV…ARELAGVNDR (241 aa)) are pyrophosphorylase. Residues 13–16 (LAAG), lysine 27, glutamine 84, and 89–90 (GT) contribute to the UDP-N-acetyl-alpha-D-glucosamine site. Aspartate 114 serves as a coordination point for Mg(2+). UDP-N-acetyl-alpha-D-glucosamine contacts are provided by glycine 151, glutamate 166, asparagine 181, and asparagine 239. Asparagine 239 lines the Mg(2+) pocket. The linker stretch occupies residues 242–262 (VQLAEAGAELNRRTVIAAMRG). An N-acetyltransferase region spans residues 263–485 (GATIVDPATT…AAQNVHNQEG (223 aa)). UDP-N-acetyl-alpha-D-glucosamine contacts are provided by arginine 344 and lysine 362. Histidine 374 serves as the catalytic Proton acceptor. Residues tyrosine 377 and asparagine 388 each contribute to the UDP-N-acetyl-alpha-D-glucosamine site. Residues alanine 391, 397-398 (NY), serine 416, and alanine 434 each bind acetyl-CoA. The interval 465-485 (RPGTAAAQAAEAAQNVHNQEG) is disordered. Low complexity predominate over residues 469–478 (AAAQAAEAAQ).

In the N-terminal section; belongs to the N-acetylglucosamine-1-phosphate uridyltransferase family. It in the C-terminal section; belongs to the transferase hexapeptide repeat family. As to quaternary structure, homotrimer. It depends on Mg(2+) as a cofactor.

The protein resides in the cytoplasm. The enzyme catalyses alpha-D-glucosamine 1-phosphate + acetyl-CoA = N-acetyl-alpha-D-glucosamine 1-phosphate + CoA + H(+). It catalyses the reaction N-acetyl-alpha-D-glucosamine 1-phosphate + UTP + H(+) = UDP-N-acetyl-alpha-D-glucosamine + diphosphate. It participates in nucleotide-sugar biosynthesis; UDP-N-acetyl-alpha-D-glucosamine biosynthesis; N-acetyl-alpha-D-glucosamine 1-phosphate from alpha-D-glucosamine 6-phosphate (route II): step 2/2. The protein operates within nucleotide-sugar biosynthesis; UDP-N-acetyl-alpha-D-glucosamine biosynthesis; UDP-N-acetyl-alpha-D-glucosamine from N-acetyl-alpha-D-glucosamine 1-phosphate: step 1/1. Its pathway is bacterial outer membrane biogenesis; LPS lipid A biosynthesis. Its function is as follows. Catalyzes the last two sequential reactions in the de novo biosynthetic pathway for UDP-N-acetylglucosamine (UDP-GlcNAc). The C-terminal domain catalyzes the transfer of acetyl group from acetyl coenzyme A to glucosamine-1-phosphate (GlcN-1-P) to produce N-acetylglucosamine-1-phosphate (GlcNAc-1-P), which is converted into UDP-GlcNAc by the transfer of uridine 5-monophosphate (from uridine 5-triphosphate), a reaction catalyzed by the N-terminal domain. The protein is Bifunctional protein GlmU of Corynebacterium glutamicum (strain R).